Here is a 106-residue protein sequence, read N- to C-terminus: UPF0145 protein Tpet_0165 (106 aa).

It belongs to the UPF0145 family.

In Thermotoga petrophila (strain ATCC BAA-488 / DSM 13995 / JCM 10881 / RKU-1), this protein is UPF0145 protein Tpet_0165.